The primary structure comprises 517 residues: GMP synthase [glutamine-hydrolyzing] (517 aa).

Positions K11–N202 constitute a Glutamine amidotransferase type-1 domain. C88 serves as the catalytic Nucleophile. Catalysis depends on residues H176 and E178. The GMPS ATP-PPase domain occupies W203 to R392. S230–S236 serves as a coordination point for ATP.

In terms of assembly, homodimer.

The catalysed reaction is XMP + L-glutamine + ATP + H2O = GMP + L-glutamate + AMP + diphosphate + 2 H(+). Its pathway is purine metabolism; GMP biosynthesis; GMP from XMP (L-Gln route): step 1/1. In terms of biological role, catalyzes the synthesis of GMP from XMP. In Lactobacillus johnsonii (strain CNCM I-12250 / La1 / NCC 533), this protein is GMP synthase [glutamine-hydrolyzing].